A 258-amino-acid polypeptide reads, in one-letter code: Imidazole glycerol phosphate synthase subunit HisF (258 aa).

Residues Asp-11 and Asp-130 contribute to the active site.

Belongs to the HisA/HisF family. In terms of assembly, heterodimer of HisH and HisF.

The protein resides in the cytoplasm. The enzyme catalyses 5-[(5-phospho-1-deoxy-D-ribulos-1-ylimino)methylamino]-1-(5-phospho-beta-D-ribosyl)imidazole-4-carboxamide + L-glutamine = D-erythro-1-(imidazol-4-yl)glycerol 3-phosphate + 5-amino-1-(5-phospho-beta-D-ribosyl)imidazole-4-carboxamide + L-glutamate + H(+). It functions in the pathway amino-acid biosynthesis; L-histidine biosynthesis; L-histidine from 5-phospho-alpha-D-ribose 1-diphosphate: step 5/9. Functionally, IGPS catalyzes the conversion of PRFAR and glutamine to IGP, AICAR and glutamate. The HisF subunit catalyzes the cyclization activity that produces IGP and AICAR from PRFAR using the ammonia provided by the HisH subunit. This chain is Imidazole glycerol phosphate synthase subunit HisF, found in Haemophilus influenzae (strain PittEE).